The sequence spans 248 residues: NADP-dependent 3-hydroxy acid dehydrogenase YdfG (248 aa).

NADP(+)-binding positions include 7-12 (GATAGF), 32-33 (RR), 54-55 (DV), and Asn-81. Ser-134 is a substrate binding site. NADP(+) is bound by residues Tyr-147, Lys-151, and 177–185 (PGLVGGTEF). The Proton acceptor role is filled by Tyr-147.

It belongs to the short-chain dehydrogenases/reductases (SDR) family. In terms of assembly, homotetramer.

It carries out the reaction 3-hydroxypropanoate + NADP(+) = 3-oxopropanoate + NADPH + H(+). The enzyme catalyses L-allo-threonine + NADP(+) = aminoacetone + CO2 + NADPH. Its function is as follows. NADP-dependent dehydrogenase with broad substrate specificity acting on 3-hydroxy acids. Catalyzes the NADP-dependent oxidation of L-allo-threonine to L-2-amino-3-keto-butyrate, which is spontaneously decarboxylated into aminoacetone. Also acts on D-threonine, L-serine, D-serine, D-3-hydroxyisobutyrate, L-3-hydroxyisobutyrate, D-glycerate and L-glycerate. Able to catalyze the reduction of the malonic semialdehyde to 3-hydroxypropionic acid. YdfG is apparently supplementing RutE, the presumed malonic semialdehyde reductase involved in pyrimidine degradation since both are able to detoxify malonic semialdehyde. The polypeptide is NADP-dependent 3-hydroxy acid dehydrogenase YdfG (Escherichia coli O157:H7).